A 194-amino-acid chain; its full sequence is uncharacterized protein (194 aa).

A signal peptide spans 1-20; sequence MLYKFTVLLLIYSYLRNLQA. Asn-31, Asn-72, Asn-133, and Asn-157 each carry an N-linked (GlcNAc...) asparagine; by host glycan.

This is an uncharacterized protein from Ostreid herpesvirus 1 (isolate France) (OsHV-1).